A 630-amino-acid chain; its full sequence is Biosynthetic arginine decarboxylase (630 aa).

At K99 the chain carries N6-(pyridoxal phosphate)lysine. 279-289 (FDVGGGLGVDY) is a binding site for substrate.

The protein belongs to the Orn/Lys/Arg decarboxylase class-II family. SpeA subfamily. The cofactor is Mg(2+). Pyridoxal 5'-phosphate serves as cofactor.

It catalyses the reaction L-arginine + H(+) = agmatine + CO2. The protein operates within amine and polyamine biosynthesis; agmatine biosynthesis; agmatine from L-arginine: step 1/1. In terms of biological role, catalyzes the biosynthesis of agmatine from arginine. The sequence is that of Biosynthetic arginine decarboxylase from Neisseria meningitidis serogroup B (strain ATCC BAA-335 / MC58).